The primary structure comprises 114 residues: UPF0145 protein STK_10800 (114 aa).

Belongs to the UPF0145 family.

This Sulfurisphaera tokodaii (strain DSM 16993 / JCM 10545 / NBRC 100140 / 7) (Sulfolobus tokodaii) protein is UPF0145 protein STK_10800.